A 151-amino-acid polypeptide reads, in one-letter code: Phosphopantetheine adenylyltransferase (151 aa).

Ser-9 contributes to the substrate binding site. Residues 9–10 (SF) and His-17 contribute to the ATP site. Substrate contacts are provided by Lys-41, Thr-73, and Arg-87. ATP contacts are provided by residues 88–90 (GLR), Glu-98, and 122–128 (KAHISST).

The protein belongs to the bacterial CoaD family. Homohexamer. The cofactor is Mg(2+).

Its subcellular location is the cytoplasm. It carries out the reaction (R)-4'-phosphopantetheine + ATP + H(+) = 3'-dephospho-CoA + diphosphate. Its pathway is cofactor biosynthesis; coenzyme A biosynthesis; CoA from (R)-pantothenate: step 4/5. Functionally, reversibly transfers an adenylyl group from ATP to 4'-phosphopantetheine, yielding dephospho-CoA (dPCoA) and pyrophosphate. This Christiangramia forsetii (strain DSM 17595 / CGMCC 1.15422 / KT0803) (Gramella forsetii) protein is Phosphopantetheine adenylyltransferase.